Reading from the N-terminus, the 226-residue chain is Endonuclease NucS (226 aa).

It belongs to the NucS endonuclease family.

The protein localises to the cytoplasm. Functionally, cleaves both 3' and 5' ssDNA extremities of branched DNA structures. The chain is Endonuclease NucS from Mycobacterium tuberculosis (strain CDC 1551 / Oshkosh).